The following is an 85-amino-acid chain: Small ribosomal subunit protein uS17 (85 aa).

The protein belongs to the universal ribosomal protein uS17 family. In terms of assembly, part of the 30S ribosomal subunit.

Functionally, one of the primary rRNA binding proteins, it binds specifically to the 5'-end of 16S ribosomal RNA. This chain is Small ribosomal subunit protein uS17, found in Mesoplasma florum (strain ATCC 33453 / NBRC 100688 / NCTC 11704 / L1) (Acholeplasma florum).